An 86-amino-acid chain; its full sequence is Small ribosomal subunit protein bS20 (86 aa).

The segment at 1-27 is disordered; it reads MANSKSAKKRAIQAEKRRQHNASRRSM.

This sequence belongs to the bacterial ribosomal protein bS20 family.

Binds directly to 16S ribosomal RNA. The polypeptide is Small ribosomal subunit protein bS20 (Vibrio atlanticus (strain LGP32) (Vibrio splendidus (strain Mel32))).